Here is a 197-residue protein sequence, read N- to C-terminus: Shikimate kinase (197 aa).

Gly15 to Ser20 contributes to the ATP binding site. Ser19 contributes to the Mg(2+) binding site. Residues Asp37, Arg61, and Gly83 each coordinate substrate. Arg121 is an ATP binding site. Arg148 lines the substrate pocket.

The protein belongs to the shikimate kinase family. In terms of assembly, monomer. Requires Mg(2+) as cofactor.

It is found in the cytoplasm. It carries out the reaction shikimate + ATP = 3-phosphoshikimate + ADP + H(+). It participates in metabolic intermediate biosynthesis; chorismate biosynthesis; chorismate from D-erythrose 4-phosphate and phosphoenolpyruvate: step 5/7. Catalyzes the specific phosphorylation of the 3-hydroxyl group of shikimic acid using ATP as a cosubstrate. This is Shikimate kinase from Chlorobium phaeovibrioides (strain DSM 265 / 1930) (Prosthecochloris vibrioformis (strain DSM 265)).